A 473-amino-acid polypeptide reads, in one-letter code: Zinc finger and SCAN domain-containing protein 21 (473 aa).

A Glycyl lysine isopeptide (Lys-Gly) (interchain with G-Cter in SUMO2) cross-link involves residue K27. An SCAN box domain is found at 45 to 127 (RQRFRQFGYH…TLLEDLEREL (83 aa)). The segment at 127 to 167 (LDEPGHQVSTPPNEQKPVWEKISSSGTAKESPSSMQPQPLE) is disordered. A compositionally biased stretch (polar residues) spans 148–165 (ISSSGTAKESPSSMQPQP). Glycyl lysine isopeptide (Lys-Gly) (interchain with G-Cter in SUMO2) cross-links involve residues K221 and K232. Positions 244–272 (LENEKGTKPPLQEAGSKKGRESVPTKPTP) are disordered. Residues 258-272 (GSKKGRESVPTKPTP) are compositionally biased toward basic and acidic residues. 7 consecutive C2H2-type zinc fingers follow at residues 277 to 299 (YICA…RRTH), 305 to 327 (YVCT…YRTH), 333 to 354 (YDCK…QRMH), 360 to 382 (YQCK…YRIH), 388 to 410 (YQCN…QRLH), 416 to 438 (YKCK…HRIH), and 444 to 466 (YWCH…QRVH). K349 participates in a covalent cross-link: Glycyl lysine isopeptide (Lys-Gly) (interchain with G-Cter in SUMO2).

Belongs to the krueppel C2H2-type zinc-finger protein family.

Its subcellular location is the nucleus. Its function is as follows. Strong transcriptional activator. Plays an important role in spermatogenesis; essential for the progression of meiotic prophase I in spermatocytes. The polypeptide is Zinc finger and SCAN domain-containing protein 21 (ZSCAN21) (Pan troglodytes (Chimpanzee)).